A 130-amino-acid polypeptide reads, in one-letter code: Small ribosomal subunit protein uS9 (130 aa).

Residues 105 to 130 form a disordered region; that stretch reads TRDPRMKERKKYGLKGARRAPQFSKR. Over residues 111–130 the composition is skewed to basic residues; that stretch reads KERKKYGLKGARRAPQFSKR.

This sequence belongs to the universal ribosomal protein uS9 family.

This Bacillus pumilus (strain SAFR-032) protein is Small ribosomal subunit protein uS9.